Consider the following 502-residue polypeptide: Acetylcholine receptor subunit alpha-type unc-63 (502 aa).

Positions 1–23 are cleaved as a signal peptide; the sequence is MGPNDHGFAYILIFLLLSPPTHA. Topologically, residues 24 to 263 are extracellular; the sequence is NRDANRLFED…HLRRKTLFYT (240 aa). Asn-136 carries an N-linked (GlcNAc...) asparagine glycan. Cys-151 and Cys-165 are oxidised to a cystine. The next 3 helical transmembrane spans lie at 264-284, 293-313, and 326-346; these read VNLI…FYLP, LCIS…EIIP, and LLFT…TLNV. Residues 347–470 lie on the Cytoplasmic side of the membrane; that stretch reads HYRSPTTHTM…WKYISVVMDR (124 aa). A helical membrane pass occupies residues 471 to 491; it reads IFLITFTFACAFGTVVIIARA.

It belongs to the ligand-gated ion channel (TC 1.A.9) family. Acetylcholine receptor (TC 1.A.9.1) subfamily. As to quaternary structure, component of nicotinic acetylcholine receptor. In muscles, composed of 2 non-alpha subunits lev-1 and unc-29, and 3 alpha subunits unc-38, unc-63 and lev-8. In cholinergic motoneurons, composed of 2 non-alpha subunits acr-2 and acr-3, and 3 alpha subunits unc-38, unc-63 and acr-12. Interacts with lev-10. As to expression, expressed in body wall muscles, in vulval muscles and in neurons.

The protein resides in the postsynaptic cell membrane. It is found in the cell membrane. In terms of biological role, alpha subunit of nicotinic acetylcholine receptor (nAChR). Probably acts in cholinergic motoneurons to regulate presynaptic neurotransmitter release, thereby ensuring normal level of excitation of cholinergic motoneurons during locomotion. Involved in nAChR sensitivity to nicotine and levamisole. The chain is Acetylcholine receptor subunit alpha-type unc-63 (unc-63) from Caenorhabditis elegans.